We begin with the raw amino-acid sequence, 316 residues long: Annexin A13 (316 aa).

A lipid anchor (N-myristoyl glycine) is attached at Gly2. Annexin repeat units lie at residues 14 to 85, 86 to 157, 169 to 241, and 245 to 316; these read FDVD…ALLD, RPSE…SLLQ, DLAG…TLVR, and DQEG…ALLH.

The protein belongs to the annexin family. In terms of assembly, monomer and homodimer. Detected in intestine, and at much lower levels also in kidney (at protein level).

The protein localises to the apical cell membrane. It localises to the cell membrane. Its subcellular location is the cytoplasmic vesicle. Binds to membranes enriched in phosphatidylserine or phosphatidylglycerol in a calcium-dependent manner. Half-maximal membrane binding requires about 60 uM calcium. Does not bind to membranes that lack phospholipids with an acidic headgroup. In terms of biological role, binds to membranes enriched in phosphatidylserine or phosphatidylglycerol in a calcium-dependent manner, but requires higher calcium levels for membrane binding than isoform A. Half-maximal membrane binding requires about 320 uM calcium. May play a role in vesicular traffic to the apical plasma membrane. The sequence is that of Annexin A13 (ANXA13) from Canis lupus familiaris (Dog).